Reading from the N-terminus, the 474-residue chain is Methylenetetrahydrofolate--tRNA-(uracil-5-)-methyltransferase TrmFO (474 aa).

Residue Gly-9–Gly-14 coordinates FAD. The tract at residues Pro-425 to Ala-451 is disordered. Over residues Arg-429–Ala-451 the composition is skewed to basic and acidic residues.

The protein belongs to the MnmG family. TrmFO subfamily. FAD is required as a cofactor.

It is found in the cytoplasm. The catalysed reaction is uridine(54) in tRNA + (6R)-5,10-methylene-5,6,7,8-tetrahydrofolate + NADH + H(+) = 5-methyluridine(54) in tRNA + (6S)-5,6,7,8-tetrahydrofolate + NAD(+). It catalyses the reaction uridine(54) in tRNA + (6R)-5,10-methylene-5,6,7,8-tetrahydrofolate + NADPH + H(+) = 5-methyluridine(54) in tRNA + (6S)-5,6,7,8-tetrahydrofolate + NADP(+). Its function is as follows. Catalyzes the folate-dependent formation of 5-methyl-uridine at position 54 (M-5-U54) in all tRNAs. The chain is Methylenetetrahydrofolate--tRNA-(uracil-5-)-methyltransferase TrmFO from Methylorubrum populi (strain ATCC BAA-705 / NCIMB 13946 / BJ001) (Methylobacterium populi).